We begin with the raw amino-acid sequence, 614 residues long: MSCLEIYNKDTMKKKEGEEETRDGTVDYYGRPSIRSNSGQWVAGIVILLNQGLATLAFFGVGVNLVLFLTRVLQQNNADAANNVSKWTGTVYIFSLVGAFLSDSYWGRYKTCAIFQVIFVIGLSSLSLSSYMFLIRPRGCGDEVTPCGSHSMMEITMFYFSIYLIALGYGGYQPNIATLGADQFDEEHPKEGYSKIAFFSYFYLALNLGSLFSNTILGYFEDEGMWALGFWASTGSAIIGLILFLVGTPRYRYFKPTGNPLSRFCQVLVAATKKSSVEAPLRGREEMYDGDSEGKNASVNTGRRIVHTDEFKFLDKAAYITARDLDDKKQDSVNPWRLCPVTQVEEVKCILRLMPIWLCTIIYSVVFTQMASLFVEQGAAMNTSVSDFKIPPASMSSFDILSVALFIFLYRRVLEPVANRFKKNGSKGITELHRMGIGLVIAVIAMIAAGIVECYRLKYADKSCTHCDGSSSLSIFWQAPQYSLIGASEVFMYVGQLEFFNAQTPDGLKSFGSALCMMSMSMGNFVSSLLVTMVVKISTEDHMPGWIPRNLNKGHLDRFYFLLAALTSIDLVVYIACAKWYKPIQLEGKDEMQDMSDDDYDTESEEEREKDSKV.

2 helical membrane-spanning segments follow: residues 41 to 61 (WVAG…FFGV) and 87 to 107 (WTGT…SYWG). The residue at position 111 (threonine 111) is a Phosphothreonine. 9 helical membrane passes run 114 to 134 (IFQV…YMFL), 152 to 172 (MMEI…YGGY), 196 to 216 (IAFF…SNTI), 226 to 246 (WALG…LFLV), 355 to 375 (PIWL…SLFV), 390 to 410 (IPPA…IFLY), 435 to 455 (MGIG…VECY), 515 to 535 (LCMM…TMVV), and 559 to 579 (FYFL…ACAK). The tract at residues 592 to 614 (MQDMSDDDYDTESEEEREKDSKV) is disordered. Acidic residues predominate over residues 593 to 606 (QDMSDDDYDTESEE).

The protein belongs to the major facilitator superfamily. Proton-dependent oligopeptide transporter (POT/PTR) (TC 2.A.17) family. As to expression, high expression in roots. Barely detected in shoots. Expressed in root pericycle cells close to the xylem.

It localises to the cell membrane. Its function is as follows. Low-affinity proton-dependent bidirectional nitrate transporter. Involved in nitrate loading into xylem and not in nitrate uptake. Not involved in histidine or dipeptides transport. The sequence is that of Protein NRT1/ PTR FAMILY 7.3 (NPF7.3) from Arabidopsis thaliana (Mouse-ear cress).